Reading from the N-terminus, the 967-residue chain is Leucine-rich repeat-containing G-protein coupled receptor 6 (967 aa).

The first 24 residues, 1-24, serve as a signal peptide directing secretion; that stretch reads MPSPPGLRALWLCAALCASRRAGG. The Extracellular segment spans residues 25 to 567; sequence APQPGPGPTA…LFESWGIRLA (543 aa). The LRRNT domain occupies 26-66; it reads PQPGPGPTACPAPCHCQEDGIMLSADCSELGLSAVPGDLDP. Asparagine 77 carries N-linked (GlcNAc...) asparagine glycosylation. LRR repeat units lie at residues 91–112, 115–136, 139–160, 163–186, 187–208, 211–232, 235–256, 258–279, 282–303, 306–328, 329–350, 353–374, 375–396, 399–420, and 423–443; these read FLEE…AFSG, SLKI…ALWE, SLQS…SFEG, SLRH…NNLP, ALQA…AFQN, SLVV…SFEG, NLET…IRTL, RLQE…AFMG, LLQT…AFQY, KLHT…KGTT, SLEI…MCQQ, RLRV…HRCQ, KLEE…TFSQ, SLQA…AFST, and SLVK…AGLG. An N-linked (GlcNAc...) asparagine glycan is attached at asparagine 208. Residues 568-588 traverse the membrane as a helical segment; sequence VWAIVLLSVLCNGLVLLTVFA. The Cytoplasmic segment spans residues 589-598; it reads GGPVPLPPVK. A helical transmembrane segment spans residues 599 to 619; the sequence is FVVGAIAGANTLTGISCGLLA. The Extracellular portion of the chain corresponds to 620 to 644; it reads SVDALTFGQFSEYGARWETGLGCRA. An intrachain disulfide couples cysteine 642 to cysteine 717. Residues 645-665 form a helical membrane-spanning segment; sequence TGFLAVLGSEASVLLLTLAAV. At 666-687 the chain is on the cytoplasmic side; sequence QCSVSVSCVRAYGKSPSLGSVR. The chain crosses the membrane as a helical span at residues 688-708; it reads AGVLGCLALAGLAAALPLASV. At 709–727 the chain is on the extracellular side; it reads GEYGASPLCLPYAPPEGQP. A helical membrane pass occupies residues 728–748; that stretch reads AALGFTVALVMMNSFCFLVVA. Over 749-774 the chain is Cytoplasmic; sequence GAYIKLYCDLPRGDFEAVWDCAMVRH. The chain crosses the membrane as a helical span at residues 775–795; it reads VAWLIFADGLLYCPVAFLSFA. Over 796–809 the chain is Extracellular; the sequence is SMLGLFPVTPEAVK. A helical membrane pass occupies residues 810–830; the sequence is SVLLVVLPLPACLNPLLYLLF. Over 831–967 the chain is Cytoplasmic; that stretch reads NPHFRDDLRR…PSGLAFASHV (137 aa).

This sequence belongs to the G-protein coupled receptor 1 family.

The protein localises to the cell membrane. Its function is as follows. Receptor for R-spondins that potentiates the canonical Wnt signaling pathway and acts as a marker of multipotent stem cells in the epidermis. Upon binding to R-spondins (RSPO1, RSPO2, RSPO3 or RSPO4), associates with phosphorylated LRP6 and frizzled receptors that are activated by extracellular Wnt receptors, triggering the canonical Wnt signaling pathway to increase expression of target genes. In contrast to classical G-protein coupled receptors, does not activate heterotrimeric G-proteins to transduce the signal. May act as a tumor suppressor. This chain is Leucine-rich repeat-containing G-protein coupled receptor 6 (LGR6), found in Homo sapiens (Human).